The sequence spans 217 residues: Formate dehydrogenase, nitrate-inducible, cytochrome b556(Fdn) subunit (217 aa).

Residues 1–11 (MSKSKMIVRTK) are Cytoplasmic-facing. Residues 12–36 (FIDRACHWTVVICFFLVALSGISFF) form a helical membrane-spanning segment. His-18 contributes to the heme b binding site. Topologically, residues 37 to 52 (FPTLQWLTQTFGTPQM) are periplasmic. A helical membrane pass occupies residues 53–74 (GRILHPFFGIAIFVALMFMFVR). His-57 is a heme b binding site. The Cytoplasmic portion of the chain corresponds to 75–110 (FVHHNIPDKKDIPWLLNIVEVLKGNEHKVADVGKYN). A helical membrane pass occupies residues 111-134 (AGQKMMFWSIMSMIFVLLVTGVII). Residues 135–150 (WRPYFAQYFPMQVVRY) are Periplasmic-facing. The helical transmembrane segment at 151-175 (SLLIHAAAGIILIHAILIHMYMAFW) threads the bilayer. Residues His-155 and His-169 each contribute to the heme b site. Residue His-169 coordinates a menaquinone. The Cytoplasmic portion of the chain corresponds to 176–217 (VKGSIKGMIEGKVSRRWAKKHHPRWYREIEKAEAKKESEEGI).

It belongs to the formate dehydrogenase gamma subunit family. Trimer of heterotrimers, consisting of subunits alpha, beta and gamma. The cofactor is heme.

It localises to the cell inner membrane. Formate dehydrogenase allows the bacterium to use formate as major electron donor during anaerobic respiration, when nitrate is used as electron acceptor. Subunit gamma is the cytochrome b556 component of the formate dehydrogenase-N, and also contains a menaquinone reduction site that receives electrons from the beta subunit (FdnH), through its hemes. Formate dehydrogenase-N is part of a system that generates proton motive force, together with the dissimilatory nitrate reductase (Nar). The chain is Formate dehydrogenase, nitrate-inducible, cytochrome b556(Fdn) subunit (fdnI) from Escherichia coli O157:H7.